We begin with the raw amino-acid sequence, 337 residues long: GTP 3',8-cyclase (337 aa).

The region spanning 17-243 (PFQRQYYYLR…HKSHTDGPAK (227 aa)) is the Radical SAM core domain. Arginine 26 contacts GTP. Residues cysteine 33 and cysteine 37 each contribute to the [4Fe-4S] cluster site. Tyrosine 39 provides a ligand contact to S-adenosyl-L-methionine. Cysteine 40 contacts [4Fe-4S] cluster. Arginine 76 is a binding site for GTP. An S-adenosyl-L-methionine-binding site is contributed by glycine 80. Residue threonine 107 participates in GTP binding. Serine 131 contributes to the S-adenosyl-L-methionine binding site. GTP is bound at residue lysine 168. Methionine 202 lines the S-adenosyl-L-methionine pocket. Positions 265 and 268 each coordinate [4Fe-4S] cluster. 270–272 (RLR) is a binding site for GTP. A [4Fe-4S] cluster-binding site is contributed by cysteine 282.

This sequence belongs to the radical SAM superfamily. MoaA family. Monomer and homodimer. [4Fe-4S] cluster is required as a cofactor.

It carries out the reaction GTP + AH2 + S-adenosyl-L-methionine = (8S)-3',8-cyclo-7,8-dihydroguanosine 5'-triphosphate + 5'-deoxyadenosine + L-methionine + A + H(+). Its pathway is cofactor biosynthesis; molybdopterin biosynthesis. Its function is as follows. Catalyzes the cyclization of GTP to (8S)-3',8-cyclo-7,8-dihydroguanosine 5'-triphosphate. In Haemophilus influenzae (strain PittGG), this protein is GTP 3',8-cyclase.